The primary structure comprises 225 residues: Transmembrane protein C16orf54 homolog (225 aa).

A helical transmembrane segment spans residues 32–52 (PCIPIMLGLASLTAFFIITTA). 2 disordered regions span residues 106-163 (DRAP…ERPH) and 178-200 (EAGLQVGSPRPWRPRQGSLEPDW). Phosphothreonine occurs at positions 113 and 117. A compositionally biased stretch (low complexity) spans 122–140 (ATAPPATSAPYSSLSSLVP). Serine 195 is subject to Phosphoserine.

Its subcellular location is the membrane. This is Transmembrane protein C16orf54 homolog from Mus musculus (Mouse).